Consider the following 151-residue polypeptide: Transcriptional repressor NrdR (151 aa).

The disordered stretch occupies residues 1–24 (MRCPKCQHNGTRVLDSRPSDESRS). Residues 3-34 (CPKCQHNGTRVLDSRPSDESRSIKRRRECEKC) fold into a zinc finger. A compositionally biased stretch (basic and acidic residues) spans 14–24 (LDSRPSDESRS). The ATP-cone domain maps to 49–139 (LLIIKKDGMR…VYRQFKDINV (91 aa)).

The protein belongs to the NrdR family. Zn(2+) serves as cofactor.

Its function is as follows. Negatively regulates transcription of bacterial ribonucleotide reductase nrd genes and operons by binding to NrdR-boxes. The sequence is that of Transcriptional repressor NrdR from Shouchella clausii (strain KSM-K16) (Alkalihalobacillus clausii).